Consider the following 123-residue polypeptide: Small ribosomal subunit protein cS23 (123 aa).

Belongs to the chloroplast-specific ribosomal protein cS23 family. In terms of assembly, part of the 30S ribosomal subunit.

It is found in the plastid. The protein resides in the chloroplast. In terms of biological role, probably a ribosomal protein or a ribosome-associated protein. This Mesostigma viride (Green alga) protein is Small ribosomal subunit protein cS23 (ycf65).